The following is a 67-amino-acid chain: Probable Sec-independent protein translocase protein TatE (67 aa).

The chain crosses the membrane as a helical span at residues Ile4–Gly21.

It belongs to the TatA/E family. TatE subfamily.

It localises to the cell inner membrane. In terms of biological role, part of the twin-arginine translocation (Tat) system that transports large folded proteins containing a characteristic twin-arginine motif in their signal peptide across membranes. TatE shares overlapping functions with TatA. In Shigella flexneri, this protein is Probable Sec-independent protein translocase protein TatE.